Here is a 271-residue protein sequence, read N- to C-terminus: Putative pyruvate, phosphate dikinase regulatory protein 1 (271 aa).

156–163 (GVSRTSKT) contacts ADP.

The protein belongs to the pyruvate, phosphate/water dikinase regulatory protein family. PDRP subfamily.

It catalyses the reaction N(tele)-phospho-L-histidyl/L-threonyl-[pyruvate, phosphate dikinase] + ADP = N(tele)-phospho-L-histidyl/O-phospho-L-threonyl-[pyruvate, phosphate dikinase] + AMP + H(+). It carries out the reaction N(tele)-phospho-L-histidyl/O-phospho-L-threonyl-[pyruvate, phosphate dikinase] + phosphate + H(+) = N(tele)-phospho-L-histidyl/L-threonyl-[pyruvate, phosphate dikinase] + diphosphate. Bifunctional serine/threonine kinase and phosphorylase involved in the regulation of the pyruvate, phosphate dikinase (PPDK) by catalyzing its phosphorylation/dephosphorylation. The protein is Putative pyruvate, phosphate dikinase regulatory protein 1 of Staphylococcus saprophyticus subsp. saprophyticus (strain ATCC 15305 / DSM 20229 / NCIMB 8711 / NCTC 7292 / S-41).